The chain runs to 435 residues: Putative F-box/FBD/LRR-repeat protein At5g56810 (435 aa).

An F-box domain is found at 14-62 (PDRISQLPNDLLFRILSLIPVSDAMSTSLLSKRWKSVWKMLPTLVYNEN). LRR repeat units follow at residues 64–95 (CSNI…TLEL), 146–173 (LKLQ…YLTC), 174–199 (VNFE…FLQR), 222–248 (KEQA…NIFD), 266–291 (SVRV…SLDL), and 316–341 (YDNF…KLNH). Positions 353 to 404 (CSVSEPSSVPECLSFHLETFQWIGYAGTFEEIAAAVYVLKNARCLKNATISL) constitute an FBD domain.

The protein is Putative F-box/FBD/LRR-repeat protein At5g56810 of Arabidopsis thaliana (Mouse-ear cress).